Reading from the N-terminus, the 183-residue chain is dCTP deaminase (183 aa).

106 to 111 (KSTYAR) contacts dCTP. The Proton donor/acceptor role is filled by E132. The dCTP site is built by Q151, Y165, and Q175.

It belongs to the dCTP deaminase family. Homotrimer.

The catalysed reaction is dCTP + H2O + H(+) = dUTP + NH4(+). It participates in pyrimidine metabolism; dUMP biosynthesis; dUMP from dCTP (dUTP route): step 1/2. Catalyzes the deamination of dCTP to dUTP. This is dCTP deaminase from Gluconobacter oxydans (strain 621H) (Gluconobacter suboxydans).